We begin with the raw amino-acid sequence, 325 residues long: Bifunctional nuclease 1 (325 aa).

The 136-residue stretch at C117–V252 folds into the BFN domain. The 35-residue stretch at T284–K318 folds into the UVR domain.

The protein belongs to the bifunctional nuclease family.

The protein resides in the nucleus. Its function is as follows. Bifunctional nuclease with both RNase and DNase activities. Involved in basal defense response. Participates in abscisic acid-derived callose deposition following infection by a necrotrophic pathogen. This chain is Bifunctional nuclease 1 (BBD1), found in Arabidopsis thaliana (Mouse-ear cress).